We begin with the raw amino-acid sequence, 376 residues long: Succinate--CoA ligase [ADP-forming] subunit beta (376 aa).

Positions 9–237 constitute an ATP-grasp domain; the sequence is KEIFSKYGIP…PTEEEKVEAD (229 aa). Residues K46, 53 to 55, V95, and E100 contribute to the ATP site; that span reads GRG. Positions 192 and 206 each coordinate Mg(2+). Substrate-binding positions include N257 and 314 to 316; that span reads GIT.

This sequence belongs to the succinate/malate CoA ligase beta subunit family. Heterotetramer of two alpha and two beta subunits. Mg(2+) is required as a cofactor.

The catalysed reaction is succinate + ATP + CoA = succinyl-CoA + ADP + phosphate. The enzyme catalyses GTP + succinate + CoA = succinyl-CoA + GDP + phosphate. The protein operates within carbohydrate metabolism; tricarboxylic acid cycle; succinate from succinyl-CoA (ligase route): step 1/1. Its function is as follows. Succinyl-CoA synthetase functions in the citric acid cycle (TCA), coupling the hydrolysis of succinyl-CoA to the synthesis of either ATP or GTP and thus represents the only step of substrate-level phosphorylation in the TCA. The beta subunit provides nucleotide specificity of the enzyme and binds the substrate succinate, while the binding sites for coenzyme A and phosphate are found in the alpha subunit. The sequence is that of Succinate--CoA ligase [ADP-forming] subunit beta from Bacteroides thetaiotaomicron (strain ATCC 29148 / DSM 2079 / JCM 5827 / CCUG 10774 / NCTC 10582 / VPI-5482 / E50).